The chain runs to 627 residues: Carene synthase, chloroplastic (627 aa).

A chloroplast-targeting transit peptide spans 1-36 (MSVISILPLASKSCLYKSLMSSTHELKALCRPIATL). Mg(2+)-binding residues include Asp378, Asp382, and Asp530. The DDXXD motif signature appears at 378-382 (DDMYD).

This sequence belongs to the terpene synthase family. Tpsd subfamily. Requires Mg(2+) as cofactor. The cofactor is Mn(2+).

Its subcellular location is the plastid. It is found in the chloroplast. The catalysed reaction is (2E)-geranyl diphosphate = (+)-car-3-ene + diphosphate. The protein operates within terpene metabolism; oleoresin biosynthesis. Terpene synthase (TPS) involved in defensive oleoresin formation in conifers in response to insect attack or other injury. The chain is Carene synthase, chloroplastic (JF67) from Picea abies (Norway spruce).